The following is a 509-amino-acid chain: Maturase K (509 aa).

This sequence belongs to the intron maturase 2 family. MatK subfamily.

The protein resides in the plastid. The protein localises to the chloroplast. Functionally, usually encoded in the trnK tRNA gene intron. Probably assists in splicing its own and other chloroplast group II introns. The chain is Maturase K from Dalea purpurea (Violet prairie clover).